The sequence spans 621 residues: 1-deoxy-D-xylulose-5-phosphate synthase (621 aa).

Thiamine diphosphate is bound by residues His80 and 121 to 123 (GHS). Position 152 (Asp152) interacts with Mg(2+). Thiamine diphosphate contacts are provided by residues 153-154 (GA), Asn181, Tyr288, and Glu370. Asn181 serves as a coordination point for Mg(2+).

Belongs to the transketolase family. DXPS subfamily. In terms of assembly, homodimer. Mg(2+) serves as cofactor. Requires thiamine diphosphate as cofactor.

The enzyme catalyses D-glyceraldehyde 3-phosphate + pyruvate + H(+) = 1-deoxy-D-xylulose 5-phosphate + CO2. The protein operates within metabolic intermediate biosynthesis; 1-deoxy-D-xylulose 5-phosphate biosynthesis; 1-deoxy-D-xylulose 5-phosphate from D-glyceraldehyde 3-phosphate and pyruvate: step 1/1. Its function is as follows. Catalyzes the acyloin condensation reaction between C atoms 2 and 3 of pyruvate and glyceraldehyde 3-phosphate to yield 1-deoxy-D-xylulose-5-phosphate (DXP). The chain is 1-deoxy-D-xylulose-5-phosphate synthase from Aeromonas hydrophila subsp. hydrophila (strain ATCC 7966 / DSM 30187 / BCRC 13018 / CCUG 14551 / JCM 1027 / KCTC 2358 / NCIMB 9240 / NCTC 8049).